A 429-amino-acid chain; its full sequence is MSKRPVIESEKPAWHDEDDDNMVVAVPKKVKMTMRVELKRTTDEEHGELDSKEYVGRLQEAFRKRHGGTPKWAKAAAGDEEEGSLLKTAAGYLAKDVNLPKTTIHTTLIKDFNIGHRYTRGITVVKFHKTRPVLIVADQGGNVQLFKVSREVKKDRFLQSANFSKFPIDSLEIADKGHSVICSSSRKEYLMQYNMETREVTQLKPPNTVPKQGIRLFAISHDSQFLAIAGHNSHIYVLHATSMEHITTISLPANASEIKFFPSHSREIWIICETGQIVIANIGLPGTKSSQHTFTDDGAVHGTTLAISQHGDYFATGSDTGIVNVYSGNDCRNSTNPRPLFNVSNLVTAVSSIAFNSDAQLMAICSNVKDNHLRLVHVASQTTFKNFPERNGKVTHARCVEFSPNGGYMAVGNDDGRLHVFEIHHFTDY.

WD repeat units follow at residues 117–156 (RYTR…KKDR), 295–336 (TDDG…NSTN), 345–386 (NLVT…TFKN), and 392–428 (GKVT…HFTD).

This sequence belongs to the WD repeat UTP18 family.

The protein resides in the nucleus. It is found in the nucleolus. Its function is as follows. Involved in nucleolar processing of pre-18S ribosomal RNA. The chain is U3 small nucleolar RNA-associated protein 18 homolog from Caenorhabditis elegans.